The chain runs to 539 residues: MTGATPENRTAPSPPPVKHVPESVLPAKPPKRNNYAFACAILASMTSILLGYDIGVMSGAMIYIKRDLKINDLQIGILAGSLNIYSLIGSCAAGRTSDWIGRRYTIVLAGAIFFAGAILMGLSPNYAFLMFGRFIAGIGVGYALMIAPVYTAEVSPASSRGFLNSFPEVFINAGIMLGYVSNLAFSNLPLKVGWRLMLGIGAVPSVILAIGVLAMPESPRWLVMQGRLGDAKRVLDKTSDSPTEATLRLEDIKHAAGIPADCHDDVVQVSRRNSHGEGVWRELLIRPTPAVRRVMIAAIGIHFFQQASGIDAVVLFSPRIFKTAGLKTDHQQLLATVAVGVVKTSFILVATFLLDRIGRRPLLLTSVGGMVLSLAALGTSLTIIDQSEKKVMWAVVVAIATVMTYVATFSIGAGPITWVYSSEIFPLRLRSQGSSMGVVVNRVTSGVISISFLPMSKAMTTGGAFYLFGGIATVAWVFFYTFLPETQGRMLEDMDELFSGFRWRDSKSKPKGNPEKTVPNPEVEIGSNKQWKEGDTQSS.

A compositionally biased stretch (polar residues) spans 1–11; that stretch reads MTGATPENRTA. The segment at 1 to 24 is disordered; that stretch reads MTGATPENRTAPSPPPVKHVPESV. 12 consecutive transmembrane segments (helical) span residues 37–57, 73–93, 104–124, 127–147, 165–185, 196–216, 296–316, 333–353, 364–384, 391–411, 433–453, and 463–483; these read FACAILASMTSILLGYDIGVM, LQIGILAGSLNIYSLIGSCAA, YTIVLAGAIFFAGAILMGLSP, AFLMFGRFIAGIGVGYALMIA, SFPEVFINAGIMLGYVSNLAF, LMLGIGAVPSVILAIGVLAMP, IAAIGIHFFQQASGIDAVVLF, LLATVAVGVVKTSFILVATFL, LTSVGGMVLSLAALGTSLTII, VMWAVVVAIATVMTYVATFSI, GSSMGVVVNRVTSGVISISFL, and GAFYLFGGIATVAWVFFYTFL. Composition is skewed to basic and acidic residues over residues 503–514 and 530–539; these read WRDSKSKPKGNP and QWKEGDTQSS. Residues 503 to 539 form a disordered region; the sequence is WRDSKSKPKGNPEKTVPNPEVEIGSNKQWKEGDTQSS.

This sequence belongs to the major facilitator superfamily. Sugar transporter (TC 2.A.1.1) family. As to expression, highly expressed in roots. Expressed in vascular tissue of leaves, sepals and siliques.

The protein localises to the cell membrane. Plasma membrane broad-spectrum sugar-proton symporter. Mediates the uptake of linear polyols such as sorbitol, xylitol, erythritol or glycerol. Can transport the cyclic polyol myo-inositol and different hexoses, pentoses (including ribose), tetroses and sugar alcohols. The sequence is that of Polyol transporter 5 (PLT5) from Arabidopsis thaliana (Mouse-ear cress).